Consider the following 274-residue polypeptide: DegV domain-containing protein Cgl2349/cg2579 (274 aa).

One can recognise a DegV domain in the interval 3–259 (VRVIVDSSAC…PGAVSVSAVF (257 aa)). Hexadecanoate is bound by residues T39 and S73.

Monomer.

Its function is as follows. Binds long-chain fatty acids, such as palmitate, and may play a role in lipid transport or fatty acid metabolism. In Corynebacterium glutamicum (strain ATCC 13032 / DSM 20300 / JCM 1318 / BCRC 11384 / CCUG 27702 / LMG 3730 / NBRC 12168 / NCIMB 10025 / NRRL B-2784 / 534), this protein is DegV domain-containing protein Cgl2349/cg2579.